Here is a 514-residue protein sequence, read N- to C-terminus: 2,3-bisphosphoglycerate-independent phosphoglycerate mutase (514 aa).

Asp14 and Ser64 together coordinate Mn(2+). Ser64 acts as the Phosphoserine intermediate in catalysis. Substrate is bound by residues His125, 155–156 (RD), Arg187, Arg193, 263–266 (RADR), and Lys336. Asp403, His407, Asp444, His445, and His463 together coordinate Mn(2+).

It belongs to the BPG-independent phosphoglycerate mutase family. In terms of assembly, monomer. Mn(2+) is required as a cofactor.

The enzyme catalyses (2R)-2-phosphoglycerate = (2R)-3-phosphoglycerate. It functions in the pathway carbohydrate degradation; glycolysis; pyruvate from D-glyceraldehyde 3-phosphate: step 3/5. Catalyzes the interconversion of 2-phosphoglycerate and 3-phosphoglycerate. The protein is 2,3-bisphosphoglycerate-independent phosphoglycerate mutase of Shewanella denitrificans (strain OS217 / ATCC BAA-1090 / DSM 15013).